The following is a 535-amino-acid chain: WD repeat-containing protein 25 (535 aa).

Disordered regions lie at residues 1–108 and 141–160; these read MASL…PRPS and DQST…RKRG. Residues 141 to 155 show a composition bias toward polar residues; sequence DQSTFESTAGNASSS. WD repeat units lie at residues 235-277, 281-320, 321-362, 365-411, 415-454, 460-501, and 504-535; these read GHRG…HCLQ, VHSE…QVFS, GQSD…VVKG, ATIQ…KISN, HERY…RMSR, GHKV…RACT, and GHTQ…KIWH.

This Mus musculus (Mouse) protein is WD repeat-containing protein 25 (Wdr25).